Consider the following 117-residue polypeptide: UPF0295 protein GTNG_0491 (117 aa).

2 helical membrane-spanning segments follow: residues 12-32 (IRTFALSLIFVGVIVMYLGLF) and 42-62 (LFMVLGLLFLVASGIVYFWIG).

This sequence belongs to the UPF0295 family.

Its subcellular location is the cell membrane. In Geobacillus thermodenitrificans (strain NG80-2), this protein is UPF0295 protein GTNG_0491.